Consider the following 378-residue polypeptide: Protein RecA (378 aa).

79–86 (GPESSGKT) provides a ligand contact to ATP.

Belongs to the RecA family.

Its subcellular location is the cytoplasm. Functionally, can catalyze the hydrolysis of ATP in the presence of single-stranded DNA, the ATP-dependent uptake of single-stranded DNA by duplex DNA, and the ATP-dependent hybridization of homologous single-stranded DNAs. It interacts with LexA causing its activation and leading to its autocatalytic cleavage. The polypeptide is Protein RecA (Streptococcus pyogenes serotype M1).